The sequence spans 217 residues: Uracil-DNA glycosylase (217 aa).

D62 (proton acceptor) is an active-site residue.

The protein belongs to the uracil-DNA glycosylase (UDG) superfamily. UNG family.

It localises to the cytoplasm. The catalysed reaction is Hydrolyzes single-stranded DNA or mismatched double-stranded DNA and polynucleotides, releasing free uracil.. In terms of biological role, excises uracil residues from the DNA which can arise as a result of misincorporation of dUMP residues by DNA polymerase or due to deamination of cytosine. The chain is Uracil-DNA glycosylase from Streptococcus uberis (strain ATCC BAA-854 / 0140J).